The primary structure comprises 719 residues: Lanosterol synthase (719 aa).

The PFTB 1 repeat unit spans residues 118–160 (RIEVIRYLVNHANPEDGGWGIHIEGKSTVFGTALNYVVLRILG). Asp-451 acts as the Proton donor in catalysis. 3 PFTB repeats span residues 478-523 (LKDS…MIEH), 555-595 (VKNA…SCVK), and 604-645 (SRRA…VVQT).

It belongs to the terpene cyclase/mutase family.

The enzyme catalyses (S)-2,3-epoxysqualene = lanosterol. The protein operates within terpene metabolism; lanosterol biosynthesis; lanosterol from farnesyl diphosphate: step 3/3. Catalyzes the cyclization of (S)-2,3 oxidosqualene to lanosterol, a reaction that forms the sterol nucleus. The chain is Lanosterol synthase (ERG7) from Pneumocystis carinii.